Here is a 316-residue protein sequence, read N- to C-terminus: Glutamyl endopeptidase (316 aa).

Positions 1–30 are cleaved as a signal peptide; sequence MVSKKSVKRGLITGLIGISIYSLGMHPAQA. The propeptide occupies 31-94; it reads APSPHTPVSS…SPAKAPYSIK (64 aa). An intrachain disulfide couples C126 to C142. Active-site charge relay system residues include H141 and S261. The cysteines at positions 275 and 279 are disulfide-linked.

It belongs to the peptidase S1B family.

Its subcellular location is the secreted. It carries out the reaction Preferential cleavage: Glu-|-Xaa, Asp-|-Xaa.. Specific for hydrolysis of peptide bonds on the carboxyl side of acidic amino acid residues, with a strong preference for Glu. The polypeptide is Glutamyl endopeptidase (blaSE) (Bacillus licheniformis (strain ATCC 14580 / DSM 13 / JCM 2505 / CCUG 7422 / NBRC 12200 / NCIMB 9375 / NCTC 10341 / NRRL NRS-1264 / Gibson 46)).